Here is a 182-residue protein sequence, read N- to C-terminus: ATP-dependent protease subunit HslV (182 aa).

Thr12 is a catalytic residue. Residues Ala167, Cys170, and Thr173 each contribute to the Na(+) site.

Belongs to the peptidase T1B family. HslV subfamily. A double ring-shaped homohexamer of HslV is capped on each side by a ring-shaped HslU homohexamer. The assembly of the HslU/HslV complex is dependent on binding of ATP.

Its subcellular location is the cytoplasm. The catalysed reaction is ATP-dependent cleavage of peptide bonds with broad specificity.. With respect to regulation, allosterically activated by HslU binding. Protease subunit of a proteasome-like degradation complex believed to be a general protein degrading machinery. The chain is ATP-dependent protease subunit HslV from Chlorobium chlorochromatii (strain CaD3).